Consider the following 324-residue polypeptide: DNA repair and recombination protein RadA (324 aa).

114-121 (GEFGSGKT) provides a ligand contact to ATP.

Belongs to the eukaryotic RecA-like protein family.

Involved in DNA repair and in homologous recombination. Binds and assemble on single-stranded DNA to form a nucleoprotein filament. Hydrolyzes ATP in a ssDNA-dependent manner and promotes DNA strand exchange between homologous DNA molecules. In Saccharolobus islandicus (strain Y.N.15.51 / Yellowstone #2) (Sulfolobus islandicus), this protein is DNA repair and recombination protein RadA.